The following is a 906-amino-acid chain: Protein translocase subunit SecA (906 aa).

ATP contacts are provided by residues Gln86, 104–108, and Asp499; that span reads GEGKT. The segment at 863–887 is disordered; that stretch reads PVVSRIDPKDRNPDDPTSWGRVSRN. Zn(2+) is bound by residues Cys890, Cys892, Cys901, and His902.

This sequence belongs to the SecA family. Monomer and homodimer. Part of the essential Sec protein translocation apparatus which comprises SecA, SecYEG and auxiliary proteins SecDF-YajC and YidC. It depends on Zn(2+) as a cofactor.

The protein localises to the cell inner membrane. It is found in the cytoplasm. The catalysed reaction is ATP + H2O + cellular proteinSide 1 = ADP + phosphate + cellular proteinSide 2.. Functionally, part of the Sec protein translocase complex. Interacts with the SecYEG preprotein conducting channel. Has a central role in coupling the hydrolysis of ATP to the transfer of proteins into and across the cell membrane, serving both as a receptor for the preprotein-SecB complex and as an ATP-driven molecular motor driving the stepwise translocation of polypeptide chains across the membrane. The polypeptide is Protein translocase subunit SecA (Rickettsia rickettsii (strain Iowa)).